Here is a 277-residue protein sequence, read N- to C-terminus: Antigen 1 (277 aa).

Positions 1–16 (MQLLALTLALCASIAA) are cleaved as a signal peptide. Residues Asn-41, Asn-71, Asn-127, and Asn-200 are each glycosylated (N-linked (GlcNAc...) asparagine). Residues 230-277 (CVGGEEENDGQGEEQTEEPAQDDQQDEAAEEEIPENCHTHEGGELHCT) form a disordered region. The span at 233–263 (GEEENDGQGEEQTEEPAQDDQQDEAAEEEIP) shows a compositional bias: acidic residues. Over residues 264 to 277 (ENCHTHEGGELHCT) the composition is skewed to basic and acidic residues.

The protein belongs to the ZPS1 family.

The chain is Antigen 1 (aspnd1) from Emericella nidulans (strain FGSC A4 / ATCC 38163 / CBS 112.46 / NRRL 194 / M139) (Aspergillus nidulans).